The chain runs to 744 residues: FNIP repeat-containing protein cigB (744 aa).

9 FNIP repeats span residues 340-376, 383-422, 426-462, 469-508, 512-550, 555-594, 598-635, 641-678, and 684-723; these read FNQK…TVTT, FNQK…TVIL, FNQK…TVTR, FNQK…TITL, FNQK…TTVR, FNQK…VTTV, and FNQK…NVYI.

This chain is FNIP repeat-containing protein cigB (cigB), found in Dictyostelium discoideum (Social amoeba).